The following is a 435-amino-acid chain: Nematode resistance protein-like HSPRO2 (435 aa).

As to quaternary structure, interacts with SNF4.

Its subcellular location is the cytoplasm. Positive regulator of basal resistance. The chain is Nematode resistance protein-like HSPRO2 (HSPRO2) from Arabidopsis thaliana (Mouse-ear cress).